A 469-amino-acid chain; its full sequence is Argininosuccinate lyase (469 aa).

Belongs to the lyase 1 family. Argininosuccinate lyase subfamily.

Its subcellular location is the cytoplasm. It catalyses the reaction 2-(N(omega)-L-arginino)succinate = fumarate + L-arginine. It participates in amino-acid biosynthesis; L-arginine biosynthesis; L-arginine from L-ornithine and carbamoyl phosphate: step 3/3. The chain is Argininosuccinate lyase from Saccharophagus degradans (strain 2-40 / ATCC 43961 / DSM 17024).